The chain runs to 348 residues: 4-hydroxy-2-oxovalerate aldolase (348 aa).

One can recognise a Pyruvate carboxyltransferase domain in the interval 9–261; that stretch reads ITVHDMTLRD…RTGVDVWKIQ (253 aa). 17–18 contributes to the substrate binding site; that stretch reads RD. Aspartate 18 contacts Mn(2+). The Proton acceptor role is filled by histidine 21. Substrate contacts are provided by serine 171 and histidine 200. 2 residues coordinate Mn(2+): histidine 200 and histidine 202. Residue tyrosine 291 participates in substrate binding.

It belongs to the 4-hydroxy-2-oxovalerate aldolase family.

The catalysed reaction is (S)-4-hydroxy-2-oxopentanoate = acetaldehyde + pyruvate. The sequence is that of 4-hydroxy-2-oxovalerate aldolase from Ralstonia pickettii (strain 12J).